Reading from the N-terminus, the 1550-residue chain is Gag-Pol polyprotein (1550 aa).

Gly2 carries the N-myristoyl glycine; by host lipid modification. The tract at residues Val7–Leu31 is interaction with Gp41. The short motif at Leu16–Arg22 is the Nuclear export signal element. The short motif at Lys26 to Lys32 is the Nuclear localization signal element. The interval Ala110–Pro136 is disordered. Position 135 is a phosphotyrosine; by host (Tyr135). Positions Asn191–Gln228 are interaction with human PPIA/CYPA and NUP153. The segment at Tyr279–Met365 is dimerization/Multimerization of capsid protein p24. CCHC-type zinc fingers lie at residues Ile389 to Ala406 and Gln410 to Glu427. Residues Pro437 to Arg508 form a disordered region. Over residues Thr456–Gly469 the composition is skewed to low complexity. Positions Arg497–Arg508 are enriched in basic and acidic residues. Residues Pro513–Leu517 form a dimerization of protease region. The Peptidase A2 domain occupies Val532–Ile601. The active-site For protease activity; shared with dimeric partner is the Asp537. 2 dimerization of protease regions span residues Gly561–Asn567 and Asn600–Pro612. The Reverse transcriptase domain occupies Glu655–Leu845. Residues Asp721, Asp796, and Asp797 each coordinate Mg(2+). Residues Phe838 to Trp846 are RT 'primer grip'. The Tryptophan repeat motif motif lies at Trp1008 to Trp1024. Residues Ile1044–Arg1167 form the RNase H type-1 domain. Residues Asp1053, Glu1088, Asp1108, and Asp1159 each contribute to the Mg(2+) site. The Integrase-type zinc-finger motif lies at Glu1173–Gln1214. The Zn(2+) site is built by His1182, His1186, Cys1210, and Cys1213. Residues Gln1223–Ile1374 form the Integrase catalytic domain. Mg(2+)-binding residues include Asp1234, Asp1286, and Glu1322. A DNA-binding region (integrase-type) is located at residues Phe1393–Asp1440.

As to quaternary structure, homotrimer; further assembles as hexamers of trimers. Interacts with gp41 (via C-terminus). Interacts with host CALM1; this interaction induces a conformational change in the Matrix protein, triggering exposure of the myristate group. Interacts with host AP3D1; this interaction allows the polyprotein trafficking to multivesicular bodies during virus assembly. Part of the pre-integration complex (PIC) which is composed of viral genome, matrix protein, Vpr and integrase. Homodimer; the homodimer further multimerizes as homohexamers or homopentamers. Interacts with human PPIA/CYPA. Interacts with human NUP153. Interacts with host PDZD8; this interaction stabilizes the capsid. Interacts with monkey TRIM5; this interaction destabilizes the capsid. In terms of assembly, homodimer, whose active site consists of two apposed aspartic acid residues. As to quaternary structure, heterodimer of p66 RT and p51 RT (RT p66/p51). Heterodimerization of RT is essential for DNA polymerase activity. The overall folding of the subdomains is similar in p66 RT and p51 RT but the spatial arrangements of the subdomains are dramatically different. Homotetramer; may further associate as a homohexadecamer. Part of the pre-integration complex (PIC) which is composed of viral genome, matrix protein, Vpr and integrase. Interacts with human SMARCB1/INI1 and human PSIP1/LEDGF isoform 1. Interacts with human KPNA3; this interaction might play a role in nuclear import of the pre-integration complex. Interacts with human NUP153; this interaction might play a role in nuclear import of the pre-integration complex. It depends on Mg(2+) as a cofactor. Post-translationally, specific enzymatic cleavages by the viral protease yield mature proteins. The protease is released by autocatalytic cleavage. The polyprotein is cleaved during and after budding, this process is termed maturation. Proteolytic cleavage of p66 RT removes the RNase H domain to yield the p51 RT subunit. Nucleocapsid protein p7 might be further cleaved after virus entry.

The protein localises to the host cell membrane. The protein resides in the host endosome. Its subcellular location is the host multivesicular body. It is found in the virion membrane. It localises to the host nucleus. The protein localises to the host cytoplasm. The protein resides in the virion. It catalyses the reaction Endopeptidase for which the P1 residue is preferably hydrophobic.. The enzyme catalyses Endohydrolysis of RNA in RNA/DNA hybrids. Three different cleavage modes: 1. sequence-specific internal cleavage of RNA. Human immunodeficiency virus type 1 and Moloney murine leukemia virus enzymes prefer to cleave the RNA strand one nucleotide away from the RNA-DNA junction. 2. RNA 5'-end directed cleavage 13-19 nucleotides from the RNA end. 3. DNA 3'-end directed cleavage 15-20 nucleotides away from the primer terminus.. The catalysed reaction is 3'-end directed exonucleolytic cleavage of viral RNA-DNA hybrid.. It carries out the reaction DNA(n) + a 2'-deoxyribonucleoside 5'-triphosphate = DNA(n+1) + diphosphate. Protease: The viral protease is inhibited by many synthetic protease inhibitors (PIs), such as amprenavir, atazanavir, indinavir, loprinavir, nelfinavir, ritonavir and saquinavir. Use of protease inhibitors in tritherapy regimens permit more ambitious therapeutic strategies. Reverse transcriptase/ribonuclease H: RT can be inhibited either by nucleoside RT inhibitors (NRTIs) or by non nucleoside RT inhibitors (NNRTIs). NRTIs act as chain terminators, whereas NNRTIs inhibit DNA polymerization by binding a small hydrophobic pocket near the RT active site and inducing an allosteric change in this region. Classical NRTIs are abacavir, adefovir (PMEA), didanosine (ddI), lamivudine (3TC), stavudine (d4T), tenofovir (PMPA), zalcitabine (ddC), and zidovudine (AZT). Classical NNRTIs are atevirdine (BHAP U-87201E), delavirdine, efavirenz (DMP-266), emivirine (I-EBU), and nevirapine (BI-RG-587). The tritherapies used as a basic effective treatment of AIDS associate two NRTIs and one NNRTI. Mediates, with Gag polyprotein, the essential events in virion assembly, including binding the plasma membrane, making the protein-protein interactions necessary to create spherical particles, recruiting the viral Env proteins, and packaging the genomic RNA via direct interactions with the RNA packaging sequence (Psi). Gag-Pol polyprotein may regulate its own translation, by the binding genomic RNA in the 5'-UTR. At low concentration, the polyprotein would promote translation, whereas at high concentration, the polyprotein would encapsidate genomic RNA and then shut off translation. Its function is as follows. Targets the polyprotein to the plasma membrane via a multipartite membrane-binding signal, that includes its myristoylated N-terminus. Matrix protein is part of the pre-integration complex. Implicated in the release from host cell mediated by Vpu. Binds to RNA. Functionally, forms the conical core that encapsulates the genomic RNA-nucleocapsid complex in the virion. Most core are conical, with only 7% tubular. The core is constituted by capsid protein hexamer subunits. The core is disassembled soon after virion entry. Host restriction factors such as TRIM5-alpha or TRIMCyp bind retroviral capsids and cause premature capsid disassembly, leading to blocks in reverse transcription. Capsid restriction by TRIM5 is one of the factors which restricts HIV-1 to the human species. Host PIN1 apparently facilitates the virion uncoating. On the other hand, interactions with PDZD8 or CYPA stabilize the capsid. In terms of biological role, encapsulates and protects viral dimeric unspliced genomic RNA (gRNA). Binds these RNAs through its zinc fingers. Acts as a nucleic acid chaperone which is involved in rearangement of nucleic acid secondary structure during gRNA retrotranscription. Also facilitates template switch leading to recombination. As part of the polyprotein, participates in gRNA dimerization, packaging, tRNA incorporation and virion assembly. Aspartyl protease that mediates proteolytic cleavages of Gag and Gag-Pol polyproteins during or shortly after the release of the virion from the plasma membrane. Cleavages take place as an ordered, step-wise cascade to yield mature proteins. This process is called maturation. Displays maximal activity during the budding process just prior to particle release from the cell. Also cleaves Nef and Vif, probably concomitantly with viral structural proteins on maturation of virus particles. Hydrolyzes host EIF4GI and PABP1 in order to shut off the capped cellular mRNA translation. The resulting inhibition of cellular protein synthesis serves to ensure maximal viral gene expression and to evade host immune response. Its function is as follows. Multifunctional enzyme that converts the viral RNA genome into dsDNA in the cytoplasm, shortly after virus entry into the cell. This enzyme displays a DNA polymerase activity that can copy either DNA or RNA templates, and a ribonuclease H (RNase H) activity that cleaves the RNA strand of RNA-DNA heteroduplexes in a partially processive 3' to 5' endonucleasic mode. Conversion of viral genomic RNA into dsDNA requires many steps. A tRNA(3)-Lys binds to the primer-binding site (PBS) situated at the 5'-end of the viral RNA. RT uses the 3' end of the tRNA primer to perform a short round of RNA-dependent minus-strand DNA synthesis. The reading proceeds through the U5 region and ends after the repeated (R) region which is present at both ends of viral RNA. The portion of the RNA-DNA heteroduplex is digested by the RNase H, resulting in a ssDNA product attached to the tRNA primer. This ssDNA/tRNA hybridizes with the identical R region situated at the 3' end of viral RNA. This template exchange, known as minus-strand DNA strong stop transfer, can be either intra- or intermolecular. RT uses the 3' end of this newly synthesized short ssDNA to perform the RNA-dependent minus-strand DNA synthesis of the whole template. RNase H digests the RNA template except for two polypurine tracts (PPTs) situated at the 5'-end and near the center of the genome. It is not clear if both polymerase and RNase H activities are simultaneous. RNase H probably can proceed both in a polymerase-dependent (RNA cut into small fragments by the same RT performing DNA synthesis) and a polymerase-independent mode (cleavage of remaining RNA fragments by free RTs). Secondly, RT performs DNA-directed plus-strand DNA synthesis using the PPTs that have not been removed by RNase H as primers. PPTs and tRNA primers are then removed by RNase H. The 3' and 5' ssDNA PBS regions hybridize to form a circular dsDNA intermediate. Strand displacement synthesis by RT to the PBS and PPT ends produces a blunt ended, linear dsDNA copy of the viral genome that includes long terminal repeats (LTRs) at both ends. Functionally, catalyzes viral DNA integration into the host chromosome, by performing a series of DNA cutting and joining reactions. This enzyme activity takes place after virion entry into a cell and reverse transcription of the RNA genome in dsDNA. The first step in the integration process is 3' processing. This step requires a complex comprising the viral genome, matrix protein, Vpr and integrase. This complex is called the pre-integration complex (PIC). The integrase protein removes 2 nucleotides from each 3' end of the viral DNA, leaving recessed CA OH's at the 3' ends. In the second step, the PIC enters cell nucleus. This process is mediated through integrase and Vpr proteins, and allows the virus to infect a non dividing cell. This ability to enter the nucleus is specific of lentiviruses, other retroviruses cannot and rely on cell division to access cell chromosomes. In the third step, termed strand transfer, the integrase protein joins the previously processed 3' ends to the 5' ends of strands of target cellular DNA at the site of integration. The 5'-ends are produced by integrase-catalyzed staggered cuts, 5 bp apart. A Y-shaped, gapped, recombination intermediate results, with the 5'-ends of the viral DNA strands and the 3' ends of target DNA strands remaining unjoined, flanking a gap of 5 bp. The last step is viral DNA integration into host chromosome. This involves host DNA repair synthesis in which the 5 bp gaps between the unjoined strands are filled in and then ligated. Since this process occurs at both cuts flanking the HIV genome, a 5 bp duplication of host DNA is produced at the ends of HIV-1 integration. Alternatively, Integrase may catalyze the excision of viral DNA just after strand transfer, this is termed disintegration. The polypeptide is Gag-Pol polyprotein (gag-pol) (Homo sapiens (Human)).